A 94-amino-acid polypeptide reads, in one-letter code: Acylphosphatase (94 aa).

Residues 7-94 (AALVRITGRV…EAPAGFRITR (88 aa)) enclose the Acylphosphatase-like domain. Residues R22 and N40 contribute to the active site.

Belongs to the acylphosphatase family.

It carries out the reaction an acyl phosphate + H2O = a carboxylate + phosphate + H(+). This Sinorhizobium medicae (strain WSM419) (Ensifer medicae) protein is Acylphosphatase (acyP).